A 1147-amino-acid chain; its full sequence is Probable phospholipid-transporting ATPase IIB (1147 aa).

At 1–146 (MADQIPLYPV…NQKYNVFTFI (146 aa)) the chain is on the cytoplasmic side. A helical membrane pass occupies residues 147–168 (PGVLYEQFKFFLNLYFLVISCS). The Extracellular portion of the chain corresponds to 169–173 (QFVPA). The chain crosses the membrane as a helical span at residues 174–196 (LKIGYLYTYWAPLGFVLAVTMTR). The Cytoplasmic portion of the chain corresponds to 197–380 (EAIDEFRRFQ…GLLDLELNRL (184 aa)). Residues 381-401 (TKALFLALVALSIVMVTLQGF) form a helical membrane-spanning segment. Over 402–409 (VGPWYRNL) the chain is Extracellular. The helical transmembrane segment at 410 to 431 (FRFLLLFSYIIPISLRVNLDMG) threads the bilayer. The Cytoplasmic segment spans residues 432–930 (KAVYGWMMMK…GRNSYKRSAA (499 aa)). The 4-aspartylphosphate intermediate role is filled by Asp468. Residues Asp468, Lys469, and Thr470 each contribute to the ATP site. Asp468 is a Mg(2+) binding site. Thr470 lines the Mg(2+) pocket. A disordered region spans residues 503-535 (RDSYSQMQSQAGGNNTGSTPLRKAQSSAPKVRK). Polar residues predominate over residues 505–530 (SYSQMQSQAGGNNTGSTPLRKAQSSA). Residues Glu591, Phe633, Lys638, Lys657, Arg686, Thr687, Thr766, Gly767, Asp768, Arg848, and Lys854 each coordinate ATP. Position 874 (Asp874) interacts with Mg(2+). Positions 877 and 878 each coordinate ATP. Mg(2+) is bound at residue Asp878. A helical membrane pass occupies residues 931–951 (LGQFVMHRGLIISTMQAVFSS). Over 952–963 (VFYFASVPLYQG) the chain is Extracellular. The helical transmembrane segment at 964 to 982 (FLMVGYATIYTMFPVFSLV) threads the bilayer. The Cytoplasmic portion of the chain corresponds to 983 to 1012 (LDQDVKPEMAMLYPELYKDLTKGRSLSFKT). A helical transmembrane segment spans residues 1013 to 1031 (FLIWVLISIYQGGILMYGA). Over 1032-1038 (LVLFESE) the chain is Extracellular. A helical transmembrane segment spans residues 1039–1061 (FVHVVAISFTALILTELLMVALT). The Cytoplasmic segment spans residues 1062–1067 (VRTWHW). The chain crosses the membrane as a helical span at residues 1068-1088 (LMVVAEFLSLGCYVSSLAFLN). Topologically, residues 1089–1105 (EYFGIGRVSFGAFLDVA) are extracellular. Residues 1106 to 1130 (FITTVTFLWKVSAITVVSCLPLYVL) traverse the membrane as a helical segment. The Cytoplasmic portion of the chain corresponds to 1131–1147 (KYLRRKLSPPSYCKLAS).

Belongs to the cation transport ATPase (P-type) (TC 3.A.3) family. Type IV subfamily. Requires Mg(2+) as cofactor.

The protein localises to the golgi apparatus. It is found in the trans-Golgi network membrane. The catalysed reaction is ATP + H2O + phospholipidSide 1 = ADP + phosphate + phospholipidSide 2.. This Homo sapiens (Human) protein is Probable phospholipid-transporting ATPase IIB (ATP9B).